The chain runs to 181 residues: MSANENNLIWIDLEMTGLDPERDRIIEIATLVTDANLNILAEGPTIAVHQSDEQLALMDDWNVRTHTASGLVERVKASTMGDREAELATLEFLKQWVPAGKSPICGNSIGQDRRFLFKYMPELEAYFHYRYLDVSTLKELARRWKPEILDGFTKQGTHQAMDDIRESVAELAYYREHFIKL.

An Exonuclease domain is found at leucine 8–leucine 171. The active site involves tyrosine 129.

This sequence belongs to the oligoribonuclease family. As to quaternary structure, homodimer.

The protein resides in the cytoplasm. In terms of biological role, 3'-to-5' exoribonuclease specific for small oligoribonucleotides. This Escherichia coli O139:H28 (strain E24377A / ETEC) protein is Oligoribonuclease.